We begin with the raw amino-acid sequence, 207 residues long: Superoxide dismutase [Mn] (207 aa).

Residues His28, His76, Asp160, and His164 each coordinate Mn(2+).

It belongs to the iron/manganese superoxide dismutase family. Mn(2+) serves as cofactor.

It catalyses the reaction 2 superoxide + 2 H(+) = H2O2 + O2. Destroys superoxide anion radicals which are normally produced within the cells and which are toxic to biological systems. This Nocardia asteroides protein is Superoxide dismutase [Mn] (sodA).